A 233-amino-acid polypeptide reads, in one-letter code: Cysteine-rich venom protein LIO1 (233 aa).

Residues 1–18 (MIVFILLSFAAVLQQSFG) form the signal peptide. One can recognise an SCP domain in the interval 37–165 (VDTHNSYRRS…PYNYFYVCQY (129 aa)). 7 cysteine pairs are disulfide-bonded: Cys74–Cys152, Cys91–Cys166, Cys147–Cys163, Cys185–Cys192, Cys188–Cys197, Cys210–Cys228, and Cys219–Cys232. Residues 201–233 (CTSENVFTNCNDMVKESGCQDERMKSICPASCF) enclose the ShKT domain.

It belongs to the CRISP family. Expressed by the venom gland.

It is found in the secreted. Its function is as follows. Blocks contraction of smooth muscle elicited by high potassium-induced depolarization, but does not block caffeine-stimulated contraction. May target voltage-gated calcium channels on smooth muscle. The chain is Cysteine-rich venom protein LIO1 from Erythrolamprus poecilogyrus (Water snake).